Reading from the N-terminus, the 156-residue chain is Ribosomal RNA large subunit methyltransferase H (156 aa).

Residues leucine 73, glycine 104, and 123–128 (LSPLTL) each bind S-adenosyl-L-methionine.

It belongs to the RNA methyltransferase RlmH family. In terms of assembly, homodimer.

The protein resides in the cytoplasm. It catalyses the reaction pseudouridine(1915) in 23S rRNA + S-adenosyl-L-methionine = N(3)-methylpseudouridine(1915) in 23S rRNA + S-adenosyl-L-homocysteine + H(+). Functionally, specifically methylates the pseudouridine at position 1915 (m3Psi1915) in 23S rRNA. This Pseudoalteromonas atlantica (strain T6c / ATCC BAA-1087) protein is Ribosomal RNA large subunit methyltransferase H.